Here is a 794-residue protein sequence, read N- to C-terminus: Phenylalanine--tRNA ligase beta subunit (794 aa).

A tRNA-binding domain is found at 39–148 (APAFDNVVVA…SDAPVGQAIR (110 aa)). In terms of domain architecture, B5 spans 399–474 (PVRKPVLLRT…RLYGYDNIPS (76 aa)). Residues Asp-452, Asp-458, Glu-461, and Glu-462 each coordinate Mg(2+). The FDX-ACB domain occupies 700–793 (SKFPPVIRDL…FEQAFGAQLR (94 aa)).

The protein belongs to the phenylalanyl-tRNA synthetase beta subunit family. Type 1 subfamily. Tetramer of two alpha and two beta subunits. It depends on Mg(2+) as a cofactor.

The protein localises to the cytoplasm. The enzyme catalyses tRNA(Phe) + L-phenylalanine + ATP = L-phenylalanyl-tRNA(Phe) + AMP + diphosphate + H(+). This Dechloromonas aromatica (strain RCB) protein is Phenylalanine--tRNA ligase beta subunit.